Consider the following 540-residue polypeptide: Methionine--tRNA ligase 1 (540 aa).

The 'HIGH' region motif lies at 10 to 20 (PYANGSLHLGH). C141, C144, C153, and C156 together coordinate Zn(2+). The 'KMSKS' region signature appears at 327 to 331 (KISTS). Residue T330 participates in ATP binding.

The protein belongs to the class-I aminoacyl-tRNA synthetase family. MetG type 1 subfamily. Monomer. Zn(2+) is required as a cofactor.

The protein resides in the cytoplasm. The catalysed reaction is tRNA(Met) + L-methionine + ATP = L-methionyl-tRNA(Met) + AMP + diphosphate. In terms of biological role, is required not only for elongation of protein synthesis but also for the initiation of all mRNA translation through initiator tRNA(fMet) aminoacylation. The chain is Methionine--tRNA ligase 1 from Alkaliphilus oremlandii (strain OhILAs) (Clostridium oremlandii (strain OhILAs)).